Consider the following 375-residue polypeptide: Succinyl-diaminopimelate desuccinylase (375 aa).

His-66 contributes to the Zn(2+) binding site. Asp-68 is a catalytic residue. Residue Asp-99 participates in Zn(2+) binding. Residue Glu-133 is the Proton acceptor of the active site. Residues Glu-134, Glu-162, and His-348 each contribute to the Zn(2+) site.

Belongs to the peptidase M20A family. DapE subfamily. In terms of assembly, homodimer. It depends on Zn(2+) as a cofactor. The cofactor is Co(2+).

It catalyses the reaction N-succinyl-(2S,6S)-2,6-diaminopimelate + H2O = (2S,6S)-2,6-diaminopimelate + succinate. It functions in the pathway amino-acid biosynthesis; L-lysine biosynthesis via DAP pathway; LL-2,6-diaminopimelate from (S)-tetrahydrodipicolinate (succinylase route): step 3/3. Functionally, catalyzes the hydrolysis of N-succinyl-L,L-diaminopimelic acid (SDAP), forming succinate and LL-2,6-diaminopimelate (DAP), an intermediate involved in the bacterial biosynthesis of lysine and meso-diaminopimelic acid, an essential component of bacterial cell walls. This Escherichia coli O1:K1 / APEC protein is Succinyl-diaminopimelate desuccinylase.